A 458-amino-acid chain; its full sequence is Argininosuccinate lyase (458 aa).

Belongs to the lyase 1 family. Argininosuccinate lyase subfamily.

It localises to the cytoplasm. The catalysed reaction is 2-(N(omega)-L-arginino)succinate = fumarate + L-arginine. It functions in the pathway amino-acid biosynthesis; L-arginine biosynthesis; L-arginine from L-ornithine and carbamoyl phosphate: step 3/3. The sequence is that of Argininosuccinate lyase from Actinobacillus pleuropneumoniae serotype 7 (strain AP76).